Here is a 476-residue protein sequence, read N- to C-terminus: RNA-binding protein 45 (476 aa).

The segment covering 1–14 (MDDAGGLGGSGGFR) has biased composition (gly residues). The interval 1 to 20 (MDDAGGLGGSGGFRPGVDSL) is disordered. 2 RRM domains span residues 26-106 (SRIF…IAQS) and 121-192 (TRIF…LAEP). A Glycyl lysine isopeptide (Lys-Gly) (interchain with G-Cter in SUMO2) cross-link involves residue Lys34. Residues 192 to 212 (PKNKVSGSPEQDDYSSGRQEA) form a disordered region. Positions 196–209 (VSGSPEQDDYSSGR) are enriched in polar residues. A phosphoserine mark is found at Ser199 and Ser464. The 73-residue stretch at 392–464 (ERLFVVFNPH…VRLKVMLADS (73 aa)) folds into the RRM 3 domain.

It localises to the cytoplasm. Its subcellular location is the nucleus. Functionally, RNA-binding protein with binding specificity for poly(C). May play an important role in neural development. The sequence is that of RNA-binding protein 45 (Rbm45) from Mus musculus (Mouse).